The primary structure comprises 512 residues: Probable anion transporter 3, chloroplastic (512 aa).

The transit peptide at 1 to 44 (MATVGSLKPLHHSSCSSSFPRNPIVNRKALLGFVFDSARKNQIR) directs the protein to the chloroplast. Transmembrane regions (helical) follow at residues 102 to 124 (VILT…VAVV), 139 to 159 (VVQS…GALV), 167 to 187 (VLAW…WAAA), 191 to 211 (LALL…MPSM), 228 to 248 (VGIS…LTPL), 250 to 270 (LSSI…LLWV), 324 to 344 (WAII…LSWM), 359 to 379 (AAWF…YAGA), 396 to 416 (KIMQ…LNFA), 422 to 442 (AAVF…GFLL), 462 to 482 (AGTL…QWLG), and 486 to 506 (AFLT…LLFA).

Belongs to the major facilitator superfamily. Sodium/anion cotransporter (TC 2.A.1.14) family. In terms of tissue distribution, expressed in roots.

The protein resides in the plastid. It is found in the chloroplast membrane. Inorganic phosphate and probable anion transporter. This chain is Probable anion transporter 3, chloroplastic (ANTR3), found in Arabidopsis thaliana (Mouse-ear cress).